A 308-amino-acid polypeptide reads, in one-letter code: Oxygen-dependent coproporphyrinogen-III oxidase (308 aa).

Ser92 is a substrate binding site. A divalent metal cation-binding residues include His96 and His106. The Proton donor role is filled by His106. Position 108–110 (108–110 (NVR)) interacts with substrate. Positions 145 and 175 each coordinate a divalent metal cation. Positions 240–275 (YVEFNLVWDRGTLFGLQTGGRTESILMSMPPLVRWE) are important for dimerization. Position 258–260 (258–260 (GGR)) interacts with substrate.

This sequence belongs to the aerobic coproporphyrinogen-III oxidase family. As to quaternary structure, homodimer. Requires a divalent metal cation as cofactor.

It localises to the cytoplasm. The enzyme catalyses coproporphyrinogen III + O2 + 2 H(+) = protoporphyrinogen IX + 2 CO2 + 2 H2O. The protein operates within porphyrin-containing compound metabolism; protoporphyrin-IX biosynthesis; protoporphyrinogen-IX from coproporphyrinogen-III (O2 route): step 1/1. Involved in the heme biosynthesis. Catalyzes the aerobic oxidative decarboxylation of propionate groups of rings A and B of coproporphyrinogen-III to yield the vinyl groups in protoporphyrinogen-IX. This Salmonella paratyphi A (strain ATCC 9150 / SARB42) protein is Oxygen-dependent coproporphyrinogen-III oxidase.